The chain runs to 286 residues: Putative type II secretion system L-type protein YghE (286 aa).

Residues 136 to 156 (VMILPILLILVALAVERGVTL) form a helical membrane-spanning segment.

The protein belongs to the GSP L family.

It is found in the cell inner membrane. In terms of biological role, involved in a type II secretion system (T2SS, formerly general secretion pathway, GSP) for the export of folded proteins across the outer membrane. The polypeptide is Putative type II secretion system L-type protein YghE (Escherichia coli (strain K12)).